We begin with the raw amino-acid sequence, 122 residues long: Large ribosomal subunit protein uL14 (122 aa).

Belongs to the universal ribosomal protein uL14 family. As to quaternary structure, part of the 50S ribosomal subunit. Forms a cluster with proteins L3 and L19. In the 70S ribosome, L14 and L19 interact and together make contacts with the 16S rRNA in bridges B5 and B8.

In terms of biological role, binds to 23S rRNA. Forms part of two intersubunit bridges in the 70S ribosome. In Kosmotoga olearia (strain ATCC BAA-1733 / DSM 21960 / TBF 19.5.1), this protein is Large ribosomal subunit protein uL14.